A 72-amino-acid chain; its full sequence is MNQVMTIFLVLGVIVYSVESSLTPSSDIPWEKCRHDCFAKYMSCQMSDSCHNKPSCRQCQVTYAICVSTGCP.

A signal peptide spans 1-20 (MNQVMTIFLVLGVIVYSVES). 4 cysteine pairs are disulfide-bonded: Cys-33–Cys-71, Cys-37–Cys-66, Cys-44–Cys-59, and Cys-50–Cys-56.

This sequence belongs to the Acrorhagin I family. In terms of tissue distribution, expressed by acrorhagi.

It is found in the secreted. The protein resides in the nematocyst. Toxin that is lethal to crab. It interacts with divalent metal ions (zinc and nickel) suggesting it may function as a metal ion chelator to regulate metal ion levels or as a metal ion transporter, or that its function is modulated by metal ions. Is not active against any of the voltage-gated potassium and sodium channels tested. In addition, it does not show activity in bacterial and fungal growth inhibitory assays as well as in hemolytic assays. In Actinia equina (Beadlet anemone), this protein is U-actitoxin-Aeq5b.